The chain runs to 299 residues: 33 kDa chaperonin (299 aa).

Cystine bridges form between C238–C240 and C271–C274.

It belongs to the HSP33 family. In terms of processing, under oxidizing conditions two disulfide bonds are formed involving the reactive cysteines. Under reducing conditions zinc is bound to the reactive cysteines and the protein is inactive.

The protein resides in the cytoplasm. Functionally, redox regulated molecular chaperone. Protects both thermally unfolding and oxidatively damaged proteins from irreversible aggregation. Plays an important role in the bacterial defense system toward oxidative stress. In Alkaliphilus oremlandii (strain OhILAs) (Clostridium oremlandii (strain OhILAs)), this protein is 33 kDa chaperonin.